A 698-amino-acid polypeptide reads, in one-letter code: Elongation factor G 1 (698 aa).

One can recognise a tr-type G domain in the interval 8 to 290 (ERYRNIGICA…AVVEFLPAPV (283 aa)). GTP-binding positions include 17-24 (AHVDAGKT), 88-92 (DTPGH), and 142-145 (NKMD).

This sequence belongs to the TRAFAC class translation factor GTPase superfamily. Classic translation factor GTPase family. EF-G/EF-2 subfamily.

Its subcellular location is the cytoplasm. Catalyzes the GTP-dependent ribosomal translocation step during translation elongation. During this step, the ribosome changes from the pre-translocational (PRE) to the post-translocational (POST) state as the newly formed A-site-bound peptidyl-tRNA and P-site-bound deacylated tRNA move to the P and E sites, respectively. Catalyzes the coordinated movement of the two tRNA molecules, the mRNA and conformational changes in the ribosome. The sequence is that of Elongation factor G 1 from Shewanella sp. (strain MR-4).